The following is a 676-amino-acid chain: ATP-dependent RNA helicase dbp-9 (676 aa).

The disordered stretch occupies residues 1 to 97; it reads MAKRKLNETD…SEKDDADLTF (97 aa). A compositionally biased stretch (basic and acidic residues) spans 70–90; sequence QQLKDEQKQQDEKDEKKQSEK. The Q motif signature appears at 95–123; it reads LTFSDLGLDPRLVQAVAKQSFEKPTLVQR. Positions 126 to 304 constitute a Helicase ATP-binding domain; it reads IPLALAGQDV…KGFFCRNPTM (179 aa). 139–146 lines the ATP pocket; sequence AKTGSGKT. Residues 251–254 carry the DEAD box motif; that stretch reads DEAD. A Helicase C-terminal domain is found at 317 to 541; the sequence is KLTQFYVKCG…PYNFNKDQME (225 aa). Over residues 410-432 the composition is skewed to basic and acidic residues; that stretch reads EDEKTEEKKEEQGEKKEGDEKKN. 2 disordered regions span residues 410–444 and 633–676; these read EDEK…RRDQ and FKKQ…RVRK. Residues 642–663 show a composition bias toward basic residues; sequence TRGKKGAKGGKGGHGKYKKGPG.

Belongs to the DEAD box helicase family. DDX56/DBP9 subfamily.

The protein resides in the nucleus. Its subcellular location is the nucleolus. The enzyme catalyses ATP + H2O = ADP + phosphate + H(+). Functionally, ATP-binding RNA helicase involved in the biogenesis of 60S ribosomal subunits and is required for the normal formation of 25S and 5.8S rRNAs. This is ATP-dependent RNA helicase dbp-9 (dbp-9) from Neurospora crassa (strain ATCC 24698 / 74-OR23-1A / CBS 708.71 / DSM 1257 / FGSC 987).